The sequence spans 339 residues: Phenylalanine--tRNA ligase alpha subunit (339 aa).

Position 254 (E254) interacts with Mg(2+).

Belongs to the class-II aminoacyl-tRNA synthetase family. Phe-tRNA synthetase alpha subunit type 1 subfamily. Tetramer of two alpha and two beta subunits. Requires Mg(2+) as cofactor.

It is found in the cytoplasm. The enzyme catalyses tRNA(Phe) + L-phenylalanine + ATP = L-phenylalanyl-tRNA(Phe) + AMP + diphosphate + H(+). This is Phenylalanine--tRNA ligase alpha subunit from Desulforudis audaxviator (strain MP104C).